A 349-amino-acid chain; its full sequence is Holliday junction branch migration complex subunit RuvB (349 aa).

Basic and acidic residues predominate over residues 1–15; that stretch reads MSDDYRETDPTRQPE. The tract at residues 1 to 25 is disordered; the sequence is MSDDYRETDPTRQPEDMGEGSLRPE. The tract at residues 1–183 is large ATPase domain (RuvB-L); that stretch reads MSDDYRETDP…FGIPLRLVFY (183 aa). ATP-binding positions include leucine 22, arginine 23, glycine 64, lysine 67, threonine 68, threonine 69, 130–132, arginine 173, tyrosine 183, and arginine 220; that span reads EDF. Threonine 68 contacts Mg(2+). The segment at 184-254 is small ATPAse domain (RuvB-S); sequence TPEELRAIVS…LADAALGRLE (71 aa). The tract at residues 257–349 is head domain (RuvB-H); the sequence is ERGLDAMDRR…SSLEQDDSAP (93 aa). The DNA site is built by arginine 293, arginine 312, and arginine 317.

Belongs to the RuvB family. Homohexamer. Forms an RuvA(8)-RuvB(12)-Holliday junction (HJ) complex. HJ DNA is sandwiched between 2 RuvA tetramers; dsDNA enters through RuvA and exits via RuvB. An RuvB hexamer assembles on each DNA strand where it exits the tetramer. Each RuvB hexamer is contacted by two RuvA subunits (via domain III) on 2 adjacent RuvB subunits; this complex drives branch migration. In the full resolvosome a probable DNA-RuvA(4)-RuvB(12)-RuvC(2) complex forms which resolves the HJ.

The protein localises to the cytoplasm. The enzyme catalyses ATP + H2O = ADP + phosphate + H(+). Functionally, the RuvA-RuvB-RuvC complex processes Holliday junction (HJ) DNA during genetic recombination and DNA repair, while the RuvA-RuvB complex plays an important role in the rescue of blocked DNA replication forks via replication fork reversal (RFR). RuvA specifically binds to HJ cruciform DNA, conferring on it an open structure. The RuvB hexamer acts as an ATP-dependent pump, pulling dsDNA into and through the RuvAB complex. RuvB forms 2 homohexamers on either side of HJ DNA bound by 1 or 2 RuvA tetramers; 4 subunits per hexamer contact DNA at a time. Coordinated motions by a converter formed by DNA-disengaged RuvB subunits stimulates ATP hydrolysis and nucleotide exchange. Immobilization of the converter enables RuvB to convert the ATP-contained energy into a lever motion, pulling 2 nucleotides of DNA out of the RuvA tetramer per ATP hydrolyzed, thus driving DNA branch migration. The RuvB motors rotate together with the DNA substrate, which together with the progressing nucleotide cycle form the mechanistic basis for DNA recombination by continuous HJ branch migration. Branch migration allows RuvC to scan DNA until it finds its consensus sequence, where it cleaves and resolves cruciform DNA. This chain is Holliday junction branch migration complex subunit RuvB, found in Gluconobacter oxydans (strain 621H) (Gluconobacter suboxydans).